A 359-amino-acid polypeptide reads, in one-letter code: Stearoyl-CoA desaturase (359 aa).

Residues 1–72 (MPAHLLQEEI…EGPRPKLEYV (72 aa)) are Cytoplasmic-facing. A helical transmembrane segment spans residues 73–93 (WRNIILMSLLHLGALYGIILI). Residue Asn-75 coordinates substrate. Over 94–97 (PTCK) the chain is Lumenal. Residues 98-118 (IYTLLWAFAYYLLSAVGVTAG) traverse the membrane as a helical segment. At 119–217 (AHRLWSHRTY…EKLVMFQRRY (99 aa)) the chain is on the cytoplasmic side. Residues His-120 and His-125 each contribute to the Fe cation site. The short motif at 120–125 (HRLWSH) is the Histidine box-1 element. The substrate site is built by Asn-148, Arg-155, and Asp-156. Fe cation is bound by residues His-157, His-160, and His-161. Residues 157–161 (HRAHH) carry the Histidine box-2 motif. Positions 188 and 189 each coordinate substrate. Position 203 is a phosphoserine (Ser-203). A helical transmembrane segment spans residues 218–237 (YKPGILLMCFILPTIVPWYC). The Lumenal portion of the chain corresponds to 238 to 241 (WGEA). A helical transmembrane segment spans residues 242 to 263 (FPQSLFVATFLRYAIVLNATWL). Residue Trp-262 participates in substrate binding. Residues 264–359 (VNSAAHLYGY…RTGDESYKSG (96 aa)) are Cytoplasmic-facing. Fe cation-binding residues include His-269, His-298, His-301, and His-302. A Histidine box-3 motif is present at residues 298 to 302 (HNYHH).

It belongs to the fatty acid desaturase type 1 family. Requires Fe(2+) as cofactor.

The protein resides in the endoplasmic reticulum membrane. The catalysed reaction is octadecanoyl-CoA + 2 Fe(II)-[cytochrome b5] + O2 + 2 H(+) = (9Z)-octadecenoyl-CoA + 2 Fe(III)-[cytochrome b5] + 2 H2O. The enzyme catalyses hexadecanoyl-CoA + 2 Fe(II)-[cytochrome b5] + O2 + 2 H(+) = (9Z)-hexadecenoyl-CoA + 2 Fe(III)-[cytochrome b5] + 2 H2O. Functionally, stearoyl-CoA desaturase that utilizes O(2) and electrons from reduced cytochrome b5 to introduce the first double bond into saturated fatty acyl-CoA substrates. Catalyzes the insertion of a cis double bond at the delta-9 position into fatty acyl-CoA substrates including palmitoyl-CoA and stearoyl-CoA. Gives rise to a mixture of 16:1 and 18:1 unsaturated fatty acids. Plays an important role in lipid biosynthesis. Plays an important role in regulating the expression of genes that are involved in lipogenesis and in regulating mitochondrial fatty acid oxidation. Plays an important role in body energy homeostasis. Contributes to the biosynthesis of membrane phospholipids, cholesterol esters and triglycerides. In Sus scrofa (Pig), this protein is Stearoyl-CoA desaturase (SCD).